Reading from the N-terminus, the 266-residue chain is Undecaprenyl-diphosphatase (266 aa).

The next 8 helical transmembrane spans lie at Met1–Ile21, Pro39–Phe59, Ile87–Gly107, Leu117–Thr137, Tyr153–Ile173, Phe189–Ala209, Phe216–Ile236, and His246–Leu266.

The protein belongs to the UppP family.

It is found in the cell inner membrane. It carries out the reaction di-trans,octa-cis-undecaprenyl diphosphate + H2O = di-trans,octa-cis-undecaprenyl phosphate + phosphate + H(+). In terms of biological role, catalyzes the dephosphorylation of undecaprenyl diphosphate (UPP). Confers resistance to bacitracin. In Prochlorococcus marinus subsp. pastoris (strain CCMP1986 / NIES-2087 / MED4), this protein is Undecaprenyl-diphosphatase.